A 417-amino-acid chain; its full sequence is NADH-quinone oxidoreductase subunit D (417 aa).

Belongs to the complex I 49 kDa subunit family. In terms of assembly, NDH-1 is composed of 14 different subunits. Subunits NuoB, C, D, E, F, and G constitute the peripheral sector of the complex.

Its subcellular location is the cell inner membrane. The enzyme catalyses a quinone + NADH + 5 H(+)(in) = a quinol + NAD(+) + 4 H(+)(out). Its function is as follows. NDH-1 shuttles electrons from NADH, via FMN and iron-sulfur (Fe-S) centers, to quinones in the respiratory chain. The immediate electron acceptor for the enzyme in this species is believed to be ubiquinone. Couples the redox reaction to proton translocation (for every two electrons transferred, four hydrogen ions are translocated across the cytoplasmic membrane), and thus conserves the redox energy in a proton gradient. The sequence is that of NADH-quinone oxidoreductase subunit D from Burkholderia thailandensis (strain ATCC 700388 / DSM 13276 / CCUG 48851 / CIP 106301 / E264).